The primary structure comprises 738 residues: Translation initiation factor IF-2 (738 aa).

Residues 1–10 (MNSMRISGHQ) show a composition bias toward polar residues. The tract at residues 1–150 (MNSMRISGHQ…PTTVRAPVRP (150 aa)) is disordered. Positions 22 to 102 (AGGGRGPGNP…GGRGPSGGRG (81 aa)) are enriched in gly residues. Over residues 103 to 120 (GDGRRREESPTDHEDGRI) the composition is skewed to basic and acidic residues. The segment covering 121-143 (NRSGRSTSTTTTRTSSTLARPTT) has biased composition (low complexity). The tr-type G domain maps to 238–405 (PRPPVVTIMG…MILLVADLNE (168 aa)). A G1 region spans residues 247–254 (GHVDHGKT). 247–254 (GHVDHGKT) lines the GTP pocket. The tract at residues 272–276 (GITQH) is G2. Residues 293-296 (DTPG) are G3. GTP-binding positions include 293–297 (DTPGH) and 347–350 (NKID). A G4 region spans residues 347–350 (NKID). Residues 383-385 (SAK) form a G5 region.

Belongs to the TRAFAC class translation factor GTPase superfamily. Classic translation factor GTPase family. IF-2 subfamily.

The protein resides in the cytoplasm. Its function is as follows. One of the essential components for the initiation of protein synthesis. Protects formylmethionyl-tRNA from spontaneous hydrolysis and promotes its binding to the 30S ribosomal subunits. Also involved in the hydrolysis of GTP during the formation of the 70S ribosomal complex. This chain is Translation initiation factor IF-2, found in Roseiflexus castenholzii (strain DSM 13941 / HLO8).